Here is a 312-residue protein sequence, read N- to C-terminus: Porphobilinogen deaminase (312 aa).

An S-(dipyrrolylmethanemethyl)cysteine modification is found at Cys-243.

This sequence belongs to the HMBS family. In terms of assembly, monomer. Dipyrromethane is required as a cofactor.

It catalyses the reaction 4 porphobilinogen + H2O = hydroxymethylbilane + 4 NH4(+). Its pathway is porphyrin-containing compound metabolism; protoporphyrin-IX biosynthesis; coproporphyrinogen-III from 5-aminolevulinate: step 2/4. Functionally, tetrapolymerization of the monopyrrole PBG into the hydroxymethylbilane pre-uroporphyrinogen in several discrete steps. The sequence is that of Porphobilinogen deaminase from Vibrio campbellii (strain ATCC BAA-1116).